The following is a 301-amino-acid chain: Uricase-2 isozyme 2 (301 aa).

Residues K17 and T63 each act as charge relay system in the active site. Urate is bound by residues T63, D64, F165, R182, V237, Q238, and N257. H259 serves as the catalytic Charge relay system. The short motif at 299–301 (SKL) is the Microbody targeting signal element.

Belongs to the uricase family.

The protein localises to the peroxisome. The catalysed reaction is urate + O2 + H2O = 5-hydroxyisourate + H2O2. The protein operates within purine metabolism; urate degradation; (S)-allantoin from urate: step 1/3. In terms of biological role, catalyzes the oxidation of uric acid to 5-hydroxyisourate, which is further processed to form (S)-allantoin. The protein is Uricase-2 isozyme 2 of Canavalia lineata (Beach bean).